A 750-amino-acid chain; its full sequence is Photosystem I P700 chlorophyll a apoprotein A1 (750 aa).

8 helical membrane-spanning segments follow: residues V70 to A93, L156 to H179, L195 to L219, I291 to Y309, W346 to Y369, L385 to V411, A433 to H455, and F531 to L549. [4Fe-4S] cluster-binding residues include C573 and C582. The next 2 membrane-spanning stretches (helical) occupy residues H589–W610 and L664–F686. H675 provides a ligand contact to chlorophyll a'. Positions 683 and 691 each coordinate chlorophyll a. Residue W692 participates in phylloquinone binding. Residues A724–A744 form a helical membrane-spanning segment.

Belongs to the PsaA/PsaB family. In terms of assembly, the PsaA/B heterodimer binds the P700 chlorophyll special pair and subsequent electron acceptors. PSI consists of a core antenna complex that captures photons, and an electron transfer chain that converts photonic excitation into a charge separation. The eukaryotic PSI reaction center is composed of at least 11 subunits. P700 is a chlorophyll a/chlorophyll a' dimer, A0 is one or more chlorophyll a, A1 is one or both phylloquinones and FX is a shared 4Fe-4S iron-sulfur center. is required as a cofactor.

It localises to the plastid. It is found in the chloroplast thylakoid membrane. It catalyses the reaction reduced [plastocyanin] + hnu + oxidized [2Fe-2S]-[ferredoxin] = oxidized [plastocyanin] + reduced [2Fe-2S]-[ferredoxin]. Its function is as follows. PsaA and PsaB bind P700, the primary electron donor of photosystem I (PSI), as well as the electron acceptors A0, A1 and FX. PSI is a plastocyanin-ferredoxin oxidoreductase, converting photonic excitation into a charge separation, which transfers an electron from the donor P700 chlorophyll pair to the spectroscopically characterized acceptors A0, A1, FX, FA and FB in turn. Oxidized P700 is reduced on the lumenal side of the thylakoid membrane by plastocyanin. This chain is Photosystem I P700 chlorophyll a apoprotein A1, found in Acorus calamus (Sweet flag).